The sequence spans 314 residues: Acetyl-coenzyme A carboxylase carboxyl transferase subunit beta (314 aa).

A CoA carboxyltransferase N-terminal domain is found at 24–293 (LWIKCPDTGQ…IDAAPEPSPA (270 aa)). Residues 283–314 (EIDAAPEPSPAAEEPAEPMPAPEAAAPSAPPA) form a disordered region. 2 stretches are compositionally biased toward low complexity: residues 284–295 (IDAAPEPSPAAE) and 304–314 (PEAAAPSAPPA).

It belongs to the AccD/PCCB family. In terms of assembly, acetyl-CoA carboxylase is a heterohexamer composed of biotin carboxyl carrier protein (AccB), biotin carboxylase (AccC) and two subunits each of ACCase subunit alpha (AccA) and ACCase subunit beta (AccD).

Its subcellular location is the cytoplasm. It carries out the reaction N(6)-carboxybiotinyl-L-lysyl-[protein] + acetyl-CoA = N(6)-biotinyl-L-lysyl-[protein] + malonyl-CoA. Its pathway is lipid metabolism; malonyl-CoA biosynthesis; malonyl-CoA from acetyl-CoA: step 1/1. In terms of biological role, component of the acetyl coenzyme A carboxylase (ACC) complex. Biotin carboxylase (BC) catalyzes the carboxylation of biotin on its carrier protein (BCCP) and then the CO(2) group is transferred by the transcarboxylase to acetyl-CoA to form malonyl-CoA. This chain is Acetyl-coenzyme A carboxylase carboxyl transferase subunit beta, found in Nitrobacter hamburgensis (strain DSM 10229 / NCIMB 13809 / X14).